The chain runs to 117 residues: Immunity protein BC_0921 (117 aa).

In terms of assembly, probably interacts with cognate toxin BC_0920 but not with other non-cognate toxins. The interaction inhibits the toxic activity of BC_0920.

The protein localises to the cytoplasm. In terms of biological role, immunity component of an LXG toxin-immunity module. Neutralizes the RNase activity of cognate toxin BC_0920. Probably does not have immunity protein activity on other toxins with the LXG domain. The polypeptide is Immunity protein BC_0921 (Bacillus cereus (strain ATCC 14579 / DSM 31 / CCUG 7414 / JCM 2152 / NBRC 15305 / NCIMB 9373 / NCTC 2599 / NRRL B-3711)).